Consider the following 194-residue polypeptide: Calcium channel flower (194 aa).

The next 3 helical transmembrane spans lie at 35–55, 66–88, and 107–127; these read LGIVAAFFAILFGLWNVFSII, IIQMVAGFVVMLLEALCCFVCFE, and GLYIAMAIPPIILCFGLASLF.

The protein belongs to the calcium channel flower family. In terms of assembly, homomultimer. Associates with the dally/ magu complex.

It is found in the cell membrane. It localises to the cytoplasmic vesicle. The protein localises to the secretory vesicle. Its subcellular location is the synaptic vesicle membrane. The protein resides in the presynaptic cell membrane. It is found in the endosome. With respect to regulation, channel activity is inhibited by La(3+), which reduces Ca(2+) influx and thus inhibits it's function in promoting activity-dependent bulk endocytosis (ADBE) in response to high stimuli. Transmembrane protein which mediates synaptic endocytosis, fitness-based cell culling, neuronal culling, morphogen gradient scaling, and calcium transport. Regulates synaptic endocytosis and hence couples exo- with endocytosis. Controls two major modes of synaptic vesicle (SV) endocytosis in the synaptic boutons of neuromuscular junctions (NMJs); Ca(2+) channel-independent Clathrin-mediated endocytosis (CME) in response to mild stimulation, and Ca(2+) channel-dependent activity-dependent bulk endocytosis (ADBE) in response to strong stimulation. Functions in ADBE and subsequent SV reformation from bulk endosomes by initiating Ca(2+) channel-dependent phosphatidylinositol 4,5-bisphosphate (PtdIns(4,5)P2) compartmentalization in synaptic boutons. There it acts at the periactive zone to provide the low Ca(2+) levels required to initiate Calcineurin activation and upregulate PtdIns(4,5)P2. Conversely PtdIns(4,5)P2 enhances fwe Ca(2+) channel-activity, establishing a positive feedback loop that induces PtdIns(4,5)P2 microdomain at the periactive zone. These microdomains trigger bulk membrane invagination (i.e. ADBE) by triggering actin polymerization while also promoting localization of fwe to bulk endosomes, thereby removing the ADBE trigger to reduce endocytosis and prevent excess membrane uptake. PtdIns(4,5)P2 then promotes SV reformation from the bulk endosomes, to coordinate ADBE and subsequent SV reformation. Different combinations of the flower isoforms at the cell membrane are also required for the identification and elimination of suboptimal or supernumerary cells during development, regeneration, and adulthood. Required for the recognition and elimination of unfit cells in the developing wing during cell competition. In the developing pupal retina, mediates the elimination of unwanted postmitotic neurons, including supernumerary photoreceptor neurons that form at the periphery of the retina and are contained within incomplete ommatidia units. Also required for efficient elimination and replacement of old neurons by newly generated neurons during regeneration in the adult brain following mechanical injury. Downstream of the flower fitness fingerprints, cells identified as unwanted or unfit are eliminated via apoptosis through the expression of ahuizotl (azot). However, the cells marked for elimination by the flower isoforms only undergo apoptosis if additional thresholds are met; (1) their neighboring fit/healthy cells express different levels of the fwe isoforms, and (2) the levels of the protective signal SPARC expressed by the loser or unwanted cells are unable to inhibit caspase activation. These additional thresholds for flower-mediated apoptosis, allows useful cells to recover from transient and limited stress before they are unnecessarily eliminated. Functions with dally and magu in a mechanism of scaling, which utilises apoptosis to ensure that the dpp morphogen gradient, which mediates organ growth, remains proportional to the size of the growing wing. In this mechanism, fwe represses dally- and Magu-dependent activity in expanding the gradient, and dally/Magu inhibits fwe-dependent apoptosis to keep cell death rate low. When the levels of these different proteins are optimally regulated the gradient correctly scales with organ growth but when this fails, fwe-mediated apoptosis is activated to trim the developing tissue to match the correct size of the gradient. This chain is Calcium channel flower, found in Drosophila sechellia (Fruit fly).